The sequence spans 203 residues: uncharacterized protein (203 aa).

Residues Val-171–Ile-191 form a helical membrane-spanning segment.

Its subcellular location is the membrane. This is an uncharacterized protein from Methanocaldococcus jannaschii (strain ATCC 43067 / DSM 2661 / JAL-1 / JCM 10045 / NBRC 100440) (Methanococcus jannaschii).